Consider the following 206-residue polypeptide: LexA repressor (206 aa).

Residues 28–48 constitute a DNA-binding region (H-T-H motif); that stretch reads VREICAAVGLSSTSTVHGHLT. Active-site for autocatalytic cleavage activity residues include Ser-127 and Lys-165.

The protein belongs to the peptidase S24 family. In terms of assembly, homodimer.

It carries out the reaction Hydrolysis of Ala-|-Gly bond in repressor LexA.. Functionally, represses a number of genes involved in the response to DNA damage (SOS response), including recA and lexA. In the presence of single-stranded DNA, RecA interacts with LexA causing an autocatalytic cleavage which disrupts the DNA-binding part of LexA, leading to derepression of the SOS regulon and eventually DNA repair. This Lactobacillus delbrueckii subsp. bulgaricus (strain ATCC 11842 / DSM 20081 / BCRC 10696 / JCM 1002 / NBRC 13953 / NCIMB 11778 / NCTC 12712 / WDCM 00102 / Lb 14) protein is LexA repressor.